Reading from the N-terminus, the 213-residue chain is Uridine kinase (213 aa).

ATP is bound at residue 12 to 19 (GGSCSGKT).

This sequence belongs to the uridine kinase family.

The protein resides in the cytoplasm. The catalysed reaction is uridine + ATP = UMP + ADP + H(+). It catalyses the reaction cytidine + ATP = CMP + ADP + H(+). Its pathway is pyrimidine metabolism; CTP biosynthesis via salvage pathway; CTP from cytidine: step 1/3. It functions in the pathway pyrimidine metabolism; UMP biosynthesis via salvage pathway; UMP from uridine: step 1/1. This chain is Uridine kinase (udk), found in Mycoplasma genitalium (strain ATCC 33530 / DSM 19775 / NCTC 10195 / G37) (Mycoplasmoides genitalium).